Consider the following 383-residue polypeptide: tRNA-specific 2-thiouridylase MnmA (383 aa).

Residues G9–S16 and M35 contribute to the ATP site. Residues N95–D97 form an interaction with target base in tRNA region. The active-site Nucleophile is C100. An intrachain disulfide couples C100 to C196. ATP is bound at residue G124. An interaction with tRNA region spans residues K146 to Q148. C196 serves as the catalytic Cysteine persulfide intermediate. The segment at R308 to Y309 is interaction with tRNA.

It belongs to the MnmA/TRMU family.

The protein resides in the cytoplasm. The catalysed reaction is S-sulfanyl-L-cysteinyl-[protein] + uridine(34) in tRNA + AH2 + ATP = 2-thiouridine(34) in tRNA + L-cysteinyl-[protein] + A + AMP + diphosphate + H(+). Its function is as follows. Catalyzes the 2-thiolation of uridine at the wobble position (U34) of tRNA, leading to the formation of s(2)U34. The chain is tRNA-specific 2-thiouridylase MnmA from Burkholderia pseudomallei (strain 1106a).